The following is a 170-amino-acid chain: 3-hydroxydecanoyl-[acyl-carrier-protein] dehydratase (170 aa).

His-71 is an active-site residue.

Belongs to the thioester dehydratase family. FabA subfamily. In terms of assembly, homodimer.

It is found in the cytoplasm. The enzyme catalyses a (3R)-hydroxyacyl-[ACP] = a (2E)-enoyl-[ACP] + H2O. It catalyses the reaction (3R)-hydroxydecanoyl-[ACP] = (2E)-decenoyl-[ACP] + H2O. It carries out the reaction (2E)-decenoyl-[ACP] = (3Z)-decenoyl-[ACP]. The protein operates within lipid metabolism; fatty acid biosynthesis. Functionally, necessary for the introduction of cis unsaturation into fatty acids. Catalyzes the dehydration of (3R)-3-hydroxydecanoyl-ACP to E-(2)-decenoyl-ACP and then its isomerization to Z-(3)-decenoyl-ACP. Can catalyze the dehydratase reaction for beta-hydroxyacyl-ACPs with saturated chain lengths up to 16:0, being most active on intermediate chain length. This Chelativorans sp. (strain BNC1) protein is 3-hydroxydecanoyl-[acyl-carrier-protein] dehydratase.